Here is a 225-residue protein sequence, read N- to C-terminus: C-type lectin domain-containing protein 91 (225 aa).

The first 21 residues, 1–21 (MRSTYILIIVPLIIIGGGVVA), serve as a signal peptide directing secretion. One can recognise a C-type lectin domain in the interval 85-215 (YSDSCYFIET…CTMAFKSICE (131 aa)). Disulfide bonds link cysteine 106-cysteine 214 and cysteine 185-cysteine 206. Asparagine 217 is a glycosylation site (N-linked (GlcNAc...) asparagine).

The protein resides in the secreted. The protein is C-type lectin domain-containing protein 91 (clec-91) of Caenorhabditis elegans.